The primary structure comprises 180 residues: Large ribosomal subunit protein uL5 (180 aa).

The protein belongs to the universal ribosomal protein uL5 family. As to quaternary structure, part of the 50S ribosomal subunit; part of the 5S rRNA/L5/L18/L25 subcomplex. Contacts the 5S rRNA and the P site tRNA. Forms a bridge to the 30S subunit in the 70S ribosome.

In terms of biological role, this is one of the proteins that bind and probably mediate the attachment of the 5S RNA into the large ribosomal subunit, where it forms part of the central protuberance. In the 70S ribosome it contacts protein S13 of the 30S subunit (bridge B1b), connecting the 2 subunits; this bridge is implicated in subunit movement. Contacts the P site tRNA; the 5S rRNA and some of its associated proteins might help stabilize positioning of ribosome-bound tRNAs. The protein is Large ribosomal subunit protein uL5 of Mycoplasma pneumoniae (strain ATCC 29342 / M129 / Subtype 1) (Mycoplasmoides pneumoniae).